Reading from the N-terminus, the 239-residue chain is tRNA (guanine-N(7)-)-methyltransferase (239 aa).

Positions 69, 94, 121, and 144 each coordinate S-adenosyl-L-methionine. Asp144 is an active-site residue. Lys148 serves as a coordination point for substrate. The interval 150–155 (RHNKRR) is interaction with RNA. Residues Asp180 and 217–220 (TKFE) each bind substrate.

This sequence belongs to the class I-like SAM-binding methyltransferase superfamily. TrmB family. In terms of assembly, monomer.

It carries out the reaction guanosine(46) in tRNA + S-adenosyl-L-methionine = N(7)-methylguanosine(46) in tRNA + S-adenosyl-L-homocysteine. Its pathway is tRNA modification; N(7)-methylguanine-tRNA biosynthesis. In terms of biological role, catalyzes the formation of N(7)-methylguanine at position 46 (m7G46) in tRNA. This chain is tRNA (guanine-N(7)-)-methyltransferase, found in Shigella flexneri serotype 5b (strain 8401).